The primary structure comprises 314 residues: 1,4-dihydroxy-2-naphthoyl-CoA synthase (314 aa).

Substrate contacts are provided by residues R58, 103 to 107 (SGGDQ), Y115, 157 to 161 (WAAGG), T184, S190, Y287, and K302.

Belongs to the enoyl-CoA hydratase/isomerase family. MenB subfamily.

The enzyme catalyses 2-succinylbenzoyl-CoA + H(+) = 1,4-dihydroxy-2-naphthoyl-CoA + H2O. Its pathway is quinol/quinone metabolism; 1,4-dihydroxy-2-naphthoate biosynthesis; 1,4-dihydroxy-2-naphthoate from chorismate: step 6/7. It functions in the pathway quinol/quinone metabolism; menaquinone biosynthesis. In terms of biological role, converts o-succinylbenzoyl-CoA (OSB-CoA) to 1,4-dihydroxy-2-naphthoyl-CoA (DHNA-CoA). This chain is 1,4-dihydroxy-2-naphthoyl-CoA synthase, found in Mycobacterium tuberculosis (strain CDC 1551 / Oshkosh).